Consider the following 412-residue polypeptide: Esterase EstD (412 aa).

An N-terminal signal peptide occupies residues 1 to 20 (MRLTVFLSLFLGVMVFGAFD). Catalysis depends on Ser243, which acts as the Nucleophile. Active-site charge relay system residues include Asp347 and His378.

This sequence belongs to the AB hydrolase superfamily. Esterase 10 family. In terms of assembly, exists mainly as a monomer and, to some extent as a dimer.

It catalyses the reaction a carboxylic ester + H2O = an alcohol + a carboxylate + H(+). With respect to regulation, is strongly inhibited by phenylmethylsulfonyl fluoride, a serine protease inhibitor, and by mercury chloride. Diethyl pyrocarbonate, a histidine modifier, also inhibits the reaction, albeit less pronounced than phenylmethylsulfonyl fluoride. EDTA and dithiothreitol have no effect on enzyme activity. Exhibits significant esterase activity with a preference for short acyl chain esters (C4-C8) in vitro. Its physiological function is not known. Displays neither proteolytic activity using casein as substrate, nor peptidase activity when assayed with L-leucine p-nitroanilide and L-proline p-nitroanilide. This is Esterase EstD from Thermotoga maritima (strain ATCC 43589 / DSM 3109 / JCM 10099 / NBRC 100826 / MSB8).